The primary structure comprises 292 residues: Recombination-promoting nuclease RpnA (292 aa).

It belongs to the Rpn/YhgA-like nuclease family. Mg(2+) serves as cofactor.

With respect to regulation, inhibited by EDTA, Zn(2+) and by Mg(2+) plus Mn(2+); stimulated by Ca(2+) in the presence of Mg(2+). Its function is as follows. A low activity DNA endonuclease yielding 3'-hydroxyl ends, equally active on ss or dsDNA, not active on dsRNA. Shows no sequence specificity. Upon expression enhances RecA-independent DNA recombination 49-fold, concomitantly reducing viability by 88% and probably inducing DNA damage as measured by induction of the SOS repair response in RecA cells. RecA-independent DNA recombination leads to replacement of recipient genes with large segments of donor DNA rather than DNA addition to the donor strain; increased expression of RpnA leads to smaller replacement segments, suggesting this protein may play a role in generating crossover events. The polypeptide is Recombination-promoting nuclease RpnA (Escherichia coli (strain K12)).